Here is a 363-residue protein sequence, read N- to C-terminus: Anhydro-N-acetylmuramic acid kinase (363 aa).

ATP is bound at residue Gly-10–Asp-17.

It belongs to the anhydro-N-acetylmuramic acid kinase family.

It carries out the reaction 1,6-anhydro-N-acetyl-beta-muramate + ATP + H2O = N-acetyl-D-muramate 6-phosphate + ADP + H(+). It functions in the pathway amino-sugar metabolism; 1,6-anhydro-N-acetylmuramate degradation. Its pathway is cell wall biogenesis; peptidoglycan recycling. Its function is as follows. Catalyzes the specific phosphorylation of 1,6-anhydro-N-acetylmuramic acid (anhMurNAc) with the simultaneous cleavage of the 1,6-anhydro ring, generating MurNAc-6-P. Is required for the utilization of anhMurNAc either imported from the medium or derived from its own cell wall murein, and thus plays a role in cell wall recycling. Contributes to intrinsic fosfomycin resistance in P.aeruginosa. The sequence is that of Anhydro-N-acetylmuramic acid kinase from Pseudomonas aeruginosa (strain ATCC 15692 / DSM 22644 / CIP 104116 / JCM 14847 / LMG 12228 / 1C / PRS 101 / PAO1).